A 1337-amino-acid polypeptide reads, in one-letter code: Protein cordon-bleu (1337 aa).

The interval 1–41 (MDAPRALAAKPPTGRKMKARAPPPPGKPAAQNVHSEQKLPH) is disordered. Serine 47, serine 50, serine 212, serine 235, serine 272, and serine 294 each carry phosphoserine. Disordered regions lie at residues 260–556 (SKAE…NDDE) and 647–768 (IASQ…HHGQ). The segment covering 288-317 (CVTTPNSPSLHSRSLTLGPSLSLGNISGVS) has biased composition (polar residues). Residues 323 to 328 (KKRRAP) carry the KKRRAP 1 motif. Residues serine 346 and serine 349 each carry the phosphoserine modification. The KKRRAP 2 motif lies at 356–361 (KKRRAP). Over residues 361 to 374 (PAPPPPQQPPPSPV) the composition is skewed to pro residues. Serine 372 carries the phosphoserine modification. Residues 377-387 (NRKEDKEENRK) are compositionally biased toward basic and acidic residues. Positions 411 to 423 (LVLPPPPPYPPPD) are enriched in pro residues. Residues 469 to 480 (ESEETASEDTTE) show a composition bias toward acidic residues. Over residues 484–500 (VMSSPSDAISLDSQQDS) the composition is skewed to polar residues. Phosphothreonine is present on threonine 522. Over residues 526–541 (GPQKSPSWGKSGSGSS) the composition is skewed to low complexity. Composition is skewed to polar residues over residues 647-666 (IASQRSHLSPSQTEHSQPFV) and 687-710 (QPTLANTSENENPVETDPTVTSLV). Serine 649 bears the Phosphoserine mark. Over residues 714–736 (LIDDPKAKDKGKVHGSSHSEKTQ) the composition is skewed to basic and acidic residues. Phosphoserine is present on serine 816. 2 disordered regions span residues 892 to 923 (TPQQQPASQEYGAHLEEERSRPQSAVSCSVKV) and 967 to 991 (KATTEQCHEEAKLARSPPTRKDDAA). Serine 1038 is subject to Phosphoserine. Polar residues predominate over residues 1070–1090 (GFNEKQTTSNQKANSTSNFSQ). Disordered stretches follow at residues 1070–1094 (GFNEKQTTSNQKANSTSNFSQALDK), 1113–1133 (MNGSARTPGNCEPPHSPKEST), 1145–1168 (KPSSLSTDGQDADDTLPSSIFGPK), and 1192–1221 (AIHSSGGREKLRKTAEQTSEGRPKKPSYVE). Serine 1128 carries the post-translational modification Phosphoserine. WH2 domains follow at residues 1185–1205 (LHSALMEAIHSSGGREKLRKT) and 1225–1245 (ERSALLAAIRGHSGTLSLRKV). Residues 1197 to 1214 (GGREKLRKTAEQTSEGRP) show a composition bias toward basic and acidic residues. Positions 1262–1310 (GAPGLDKPQQEDLGLPPPPALPPPPAPAPQAPSASVTVSRFSTGTPSNS) are disordered. Pro residues predominate over residues 1276 to 1291 (LPPPPALPPPPAPAPQ). Over residues 1297 to 1310 (VTVSRFSTGTPSNS) the composition is skewed to polar residues. Serine 1303 is modified (phosphoserine). The WH2 3 domain maps to 1313-1333 (ARQALMDAIRSGTGAARLRKV).

As to quaternary structure, identified in a complex composed of COBL, PACSIN1 and WASL. Interacts with PACSIN1, PACSIN2 and PACSIN3. Identified in a complex composed of ACTA1, COBL, GSN and TMSB4X. Interacts (via WH2 domains) with actin monomers. Interacts with DBNL. As to expression, detected in brain cortex and in the Purkinje cell layer in the cerebellum. Detected in hippocampus neurons, and at lower levels in testis, lung and spleen (at protein level). Detected in embryonic neural tube.

It localises to the cell membrane. It is found in the cytoplasm. The protein localises to the cytoskeleton. The protein resides in the cell projection. Its subcellular location is the ruffle. Its function is as follows. Plays an important role in the reorganization of the actin cytoskeleton. Binds to and sequesters actin monomers (G actin). Nucleates actin polymerization by assembling three actin monomers in cross-filament orientation and thereby promotes growth of actin filaments at the barbed end. Can also mediate actin depolymerization at barbed ends and severing of actin filaments. Promotes formation of cell ruffles. Regulates neuron morphogenesis and increases branching of axons and dendrites. Regulates dendrite branching in Purkinje cells. This Mus musculus (Mouse) protein is Protein cordon-bleu (Cobl).